The following is a 426-amino-acid chain: Glutamate-1-semialdehyde 2,1-aminomutase (426 aa).

K265 carries the post-translational modification N6-(pyridoxal phosphate)lysine.

Belongs to the class-III pyridoxal-phosphate-dependent aminotransferase family. HemL subfamily. As to quaternary structure, homodimer. It depends on pyridoxal 5'-phosphate as a cofactor.

It localises to the cytoplasm. It carries out the reaction (S)-4-amino-5-oxopentanoate = 5-aminolevulinate. It functions in the pathway porphyrin-containing compound metabolism; protoporphyrin-IX biosynthesis; 5-aminolevulinate from L-glutamyl-tRNA(Glu): step 2/2. The protein is Glutamate-1-semialdehyde 2,1-aminomutase of Yersinia pestis bv. Antiqua (strain Antiqua).